We begin with the raw amino-acid sequence, 131 residues long: MRHRNSNRKLNRTSSHRQAMLRNMANSLLRHEIIKTTLPKAKELRRVAEPLITLGKDATLANRRLAFSRLRDRDIVGKLFNELGPRYQTRNGGYLRILKCGFRVGDNAPMALVELVDRPELATDGEVVTAE.

It belongs to the bacterial ribosomal protein bL17 family. As to quaternary structure, part of the 50S ribosomal subunit. Contacts protein L32.

The chain is Large ribosomal subunit protein bL17 from Methylobacillus flagellatus (strain ATCC 51484 / DSM 6875 / VKM B-1610 / KT).